The primary structure comprises 940 residues: Valine--tRNA ligase (940 aa).

Residues 47 to 57 (PNVTGILHMGH) carry the 'HIGH' region motif. The 'KMSKS' region motif lies at 564-568 (KLSKS). K567 is a binding site for ATP. Residues 872–938 (PMEHITKERN…LQSILDKLAS (67 aa)) are a coiled coil.

It belongs to the class-I aminoacyl-tRNA synthetase family. ValS type 1 subfamily. As to quaternary structure, monomer.

The protein resides in the cytoplasm. It carries out the reaction tRNA(Val) + L-valine + ATP = L-valyl-tRNA(Val) + AMP + diphosphate. Its function is as follows. Catalyzes the attachment of valine to tRNA(Val). As ValRS can inadvertently accommodate and process structurally similar amino acids such as threonine, to avoid such errors, it has a 'posttransfer' editing activity that hydrolyzes mischarged Thr-tRNA(Val) in a tRNA-dependent manner. The chain is Valine--tRNA ligase from Chlamydia caviae (strain ATCC VR-813 / DSM 19441 / 03DC25 / GPIC) (Chlamydophila caviae).